The primary structure comprises 263 residues: Phosphate import ATP-binding protein PstB (263 aa).

The region spanning Ile-17–Ile-258 is the ABC transporter domain. ATP is bound at residue Gly-49–Ser-56.

It belongs to the ABC transporter superfamily. Phosphate importer (TC 3.A.1.7) family. As to quaternary structure, the complex is composed of two ATP-binding proteins (PstB), two transmembrane proteins (PstC and PstA) and a solute-binding protein (PstS).

It is found in the cell inner membrane. It carries out the reaction phosphate(out) + ATP + H2O = ADP + 2 phosphate(in) + H(+). Functionally, part of the ABC transporter complex PstSACB involved in phosphate import. Responsible for energy coupling to the transport system. The polypeptide is Phosphate import ATP-binding protein PstB (Ralstonia nicotianae (strain ATCC BAA-1114 / GMI1000) (Ralstonia solanacearum)).